The following is a 275-amino-acid chain: Apoptosis inhibitor 1 (275 aa).

2 BIR repeats span residues 24–91 (LIER…CVYA) and 126–193 (PSAR…CYFV). Positions 163, 166, 183, and 190 each coordinate Zn(2+). The RING-type zinc finger occupies 227-263 (CKVCLERQRDAVLLPCRHFCVCMQCYFALDGKCPTCR).

Functionally, acts by blocking cellular apoptosis rather than by preventing viral stimulation of apoptosis. The chain is Apoptosis inhibitor 1 (IAP1) from Orgyia pseudotsugata (Douglas-fir tussock moth).